Consider the following 355-residue polypeptide: S-adenosylmethionine:tRNA ribosyltransferase-isomerase (355 aa).

Belongs to the QueA family. Monomer.

Its subcellular location is the cytoplasm. The catalysed reaction is 7-aminomethyl-7-carbaguanosine(34) in tRNA + S-adenosyl-L-methionine = epoxyqueuosine(34) in tRNA + adenine + L-methionine + 2 H(+). The protein operates within tRNA modification; tRNA-queuosine biosynthesis. Its function is as follows. Transfers and isomerizes the ribose moiety from AdoMet to the 7-aminomethyl group of 7-deazaguanine (preQ1-tRNA) to give epoxyqueuosine (oQ-tRNA). The polypeptide is S-adenosylmethionine:tRNA ribosyltransferase-isomerase (Aeromonas hydrophila subsp. hydrophila (strain ATCC 7966 / DSM 30187 / BCRC 13018 / CCUG 14551 / JCM 1027 / KCTC 2358 / NCIMB 9240 / NCTC 8049)).